A 474-amino-acid polypeptide reads, in one-letter code: Carbohydrate sulfotransferase 3 (474 aa).

Topologically, residues 1-19 are cytoplasmic; that stretch reads MEKGLALPQDCRDLVHNLK. Residues 20–38 form a helical; Signal-anchor for type II membrane protein membrane-spanning segment; sequence IRGRYVLFLAFVVIVFIFI. Over 39 to 474 the chain is Lumenal; the sequence is EKENKIISRV…LEERGTFWVT (436 aa). Residues Asn-63, Asn-74, and Asn-96 are each glycosylated (N-linked (GlcNAc...) asparagine). Residue 137-143 coordinates 3'-phosphoadenylyl sulfate; that stretch reads TRTGSSF. Residue Asn-252 is glycosylated (N-linked (GlcNAc...) asparagine). 297–305 provides a ligand contact to 3'-phosphoadenylyl sulfate; the sequence is RDPRAVLAS. N-linked (GlcNAc...) asparagine glycans are attached at residues Asn-415 and Asn-459.

It belongs to the sulfotransferase 1 family. Gal/GlcNAc/GalNAc subfamily. Post-translationally, N-glycosylated.

It localises to the golgi apparatus membrane. The catalysed reaction is chondroitin beta-D-glucuronate + n 3'-phosphoadenylyl sulfate = chondroitin 6'-sulfate + n adenosine 3',5'-bisphosphate + n H(+). It carries out the reaction 3'-phosphoadenylyl sulfate + keratan = adenosine 3',5'-bisphosphate + keratan 6'-sulfate.. Functionally, sulfotransferase that utilizes 3'-phospho-5'-adenylyl sulfate (PAPS) as sulfonate donor to catalyze the transfer of sulfate to position 6 of the N-acetylgalactosamine (GalNAc) residue of chondroitin. Chondroitin sulfate constitutes the predominant proteoglycan present in cartilage and is distributed on the surfaces of many cells and extracellular matrices. Catalyzes with a lower efficiency the sulfation of Gal residues of keratan sulfate, another glycosaminoglycan. Can also catalyze the sulfation of the Gal residues in sialyl N-acetyllactosamine (sialyl LacNAc) oligosaccharides. May play a role in the maintenance of naive T-lymphocytes in the spleen. In Rattus norvegicus (Rat), this protein is Carbohydrate sulfotransferase 3 (Chst3).